Here is a 432-residue protein sequence, read N- to C-terminus: Adenylosuccinate synthetase (432 aa).

Residues 13–19 (GDEGKGK) and 41–43 (GHT) contribute to the GTP site. Residue Asp14 is the Proton acceptor of the active site. Mg(2+)-binding residues include Asp14 and Gly41. Residues 14–17 (DEGK), 39–42 (NAGH), Thr130, Arg144, Gln225, Thr240, and Arg304 contribute to the IMP site. Residue His42 is the Proton donor of the active site. A substrate-binding site is contributed by 300-306 (ATTGRRR). Residues Arg306, 332-334 (KLD), and 415-417 (STG) contribute to the GTP site.

Belongs to the adenylosuccinate synthetase family. In terms of assembly, homodimer. Mg(2+) is required as a cofactor.

Its subcellular location is the cytoplasm. The catalysed reaction is IMP + L-aspartate + GTP = N(6)-(1,2-dicarboxyethyl)-AMP + GDP + phosphate + 2 H(+). It participates in purine metabolism; AMP biosynthesis via de novo pathway; AMP from IMP: step 1/2. Functionally, plays an important role in the de novo pathway of purine nucleotide biosynthesis. Catalyzes the first committed step in the biosynthesis of AMP from IMP. The sequence is that of Adenylosuccinate synthetase from Salmonella paratyphi C (strain RKS4594).